A 236-amino-acid polypeptide reads, in one-letter code: UPF0280 protein Mlab_0453 (236 aa).

This sequence belongs to the UPF0280 family.

This is UPF0280 protein Mlab_0453 from Methanocorpusculum labreanum (strain ATCC 43576 / DSM 4855 / Z).